The following is a 200-amino-acid chain: dITP/XTP pyrophosphatase (200 aa).

A substrate-binding site is contributed by serine 7–lysine 12. Catalysis depends on aspartate 68, which acts as the Proton acceptor. Aspartate 68 contributes to the Mg(2+) binding site. Residues serine 69, phenylalanine 147–aspartate 150, lysine 170, and histidine 175–arginine 176 each bind substrate.

This sequence belongs to the HAM1 NTPase family. Homodimer. The cofactor is Mg(2+).

It carries out the reaction XTP + H2O = XMP + diphosphate + H(+). The enzyme catalyses dITP + H2O = dIMP + diphosphate + H(+). It catalyses the reaction ITP + H2O = IMP + diphosphate + H(+). Its function is as follows. Pyrophosphatase that catalyzes the hydrolysis of nucleoside triphosphates to their monophosphate derivatives, with a high preference for the non-canonical purine nucleotides XTP (xanthosine triphosphate), dITP (deoxyinosine triphosphate) and ITP. Seems to function as a house-cleaning enzyme that removes non-canonical purine nucleotides from the nucleotide pool, thus preventing their incorporation into DNA/RNA and avoiding chromosomal lesions. In Acholeplasma laidlawii (strain PG-8A), this protein is dITP/XTP pyrophosphatase.